The sequence spans 302 residues: NAD kinase 2 (302 aa).

The active-site Proton acceptor is Asp-79. Residues Asp-79–Gly-80, Asn-153–Glu-154, Asp-183, Thr-194–Ser-199, Ala-218, and Asn-252 each bind NAD(+).

The protein belongs to the NAD kinase family. The cofactor is a divalent metal cation.

It is found in the cytoplasm. The enzyme catalyses NAD(+) + ATP = ADP + NADP(+) + H(+). Involved in the regulation of the intracellular balance of NAD and NADP, and is a key enzyme in the biosynthesis of NADP. Catalyzes specifically the phosphorylation on 2'-hydroxyl of the adenosine moiety of NAD to yield NADP. The protein is NAD kinase 2 of Prochlorococcus marinus subsp. pastoris (strain CCMP1986 / NIES-2087 / MED4).